Here is a 254-residue protein sequence, read N- to C-terminus: UPF0246 protein CPF_2407 (254 aa).

This sequence belongs to the UPF0246 family.

This chain is UPF0246 protein CPF_2407, found in Clostridium perfringens (strain ATCC 13124 / DSM 756 / JCM 1290 / NCIMB 6125 / NCTC 8237 / Type A).